The following is a 679-amino-acid chain: Glycine--tRNA ligase beta subunit (679 aa).

This sequence belongs to the class-II aminoacyl-tRNA synthetase family. In terms of assembly, tetramer of two alpha and two beta subunits.

It is found in the cytoplasm. It catalyses the reaction tRNA(Gly) + glycine + ATP = glycyl-tRNA(Gly) + AMP + diphosphate. In Streptococcus mutans serotype c (strain ATCC 700610 / UA159), this protein is Glycine--tRNA ligase beta subunit.